A 449-amino-acid chain; its full sequence is Exodeoxyribonuclease 7 large subunit (449 aa).

It belongs to the XseA family. Heterooligomer composed of large and small subunits.

The protein localises to the cytoplasm. The catalysed reaction is Exonucleolytic cleavage in either 5'- to 3'- or 3'- to 5'-direction to yield nucleoside 5'-phosphates.. Bidirectionally degrades single-stranded DNA into large acid-insoluble oligonucleotides, which are then degraded further into small acid-soluble oligonucleotides. In Salmonella paratyphi B (strain ATCC BAA-1250 / SPB7), this protein is Exodeoxyribonuclease 7 large subunit.